Here is a 327-residue protein sequence, read N- to C-terminus: Biotin synthase (327 aa).

The Radical SAM core domain occupies Asn-42–Ser-268. Cys-57, Cys-61, and Cys-64 together coordinate [4Fe-4S] cluster. [2Fe-2S] cluster-binding residues include Cys-102, Cys-134, Cys-194, and Arg-266.

This sequence belongs to the radical SAM superfamily. Biotin synthase family. Homodimer. Requires [4Fe-4S] cluster as cofactor. The cofactor is [2Fe-2S] cluster.

The enzyme catalyses (4R,5S)-dethiobiotin + (sulfur carrier)-SH + 2 reduced [2Fe-2S]-[ferredoxin] + 2 S-adenosyl-L-methionine = (sulfur carrier)-H + biotin + 2 5'-deoxyadenosine + 2 L-methionine + 2 oxidized [2Fe-2S]-[ferredoxin]. It functions in the pathway cofactor biosynthesis; biotin biosynthesis; biotin from 7,8-diaminononanoate: step 2/2. In terms of biological role, catalyzes the conversion of dethiobiotin (DTB) to biotin by the insertion of a sulfur atom into dethiobiotin via a radical-based mechanism. The sequence is that of Biotin synthase from Rhizobium rhizogenes (strain K84 / ATCC BAA-868) (Agrobacterium radiobacter).